The following is a 443-amino-acid chain: Transmembrane protein 184C (443 aa).

Transmembrane regions (helical) follow at residues 15 to 35 (LVVL…IWKL), 46 to 66 (AWFI…WGIL), 84 to 104 (ILWM…YPDI), 182 to 202 (PVTT…EGDF), 210 to 230 (YLVI…VLFY), 252 to 272 (VVFV…AGVI), and 284 to 304 (VATG…AVAH). Positions 369-378 (TSLLSSSTQD) are enriched in polar residues. Residues 369-422 (TSLLSSSTQDPISAASSIPPSPSGHYQGFGQTITPQTTPTATTMPEELYSADSP) form a disordered region. Residues 399–411 (QTITPQTTPTATT) show a composition bias toward low complexity.

Belongs to the TMEM184 family.

It is found in the membrane. Functionally, may play a role in cell growth. In Xenopus tropicalis (Western clawed frog), this protein is Transmembrane protein 184C (tmem184c).